Here is a 406-residue protein sequence, read N- to C-terminus: Ubiquitin-like modifier-activating enzyme 5 (406 aa).

Residues Gly-82, Asp-103, Lys-126, Asn-149, and Asn-183 each coordinate ATP. Cys-225 and Cys-228 together coordinate Zn(2+). The active-site Glycyl thioester intermediate is the Cys-249. Zn(2+) is bound by residues Cys-302 and Cys-307. Positions 373–397 are disordered; it reads EAPSKSTETTSEATTTTTGDETSLD. The span at 378–393 shows a compositional bias: low complexity; sequence STETTSEATTTTTGDE.

This sequence belongs to the ubiquitin-activating E1 family. UBA5 subfamily.

E1-like enzyme which activates UFM1. The sequence is that of Ubiquitin-like modifier-activating enzyme 5 from Drosophila willistoni (Fruit fly).